The sequence spans 859 residues: MKGDSRHLNEEEGASGYEECIIVNGNFSDQSSDTKDAPSPPVLEAICTEPVCTPETRGRRSSSRLSKREVSSLLNYTQDMTGDGDRDDEVDDGNGSDILMPKLTRETKDTRTRSESPAVRTRHSNGTSSLERQRASPRITRGRQGRHHVQEYPVEFPATRSRRRRASSSASTPWSSPASVDFMEEVTPKSVSTPSVDLSQDGDQEGMDTTQVDAESRDGDSTEYQDDKEFGIGDLVWGKIKGFSWWPAMVVSWKATSKRQAMPGMRWVQWFGDGKFSEISADKLVALGLFSQHFNLATFNKLVSYRKAMYHTLEKARVRAGKTFSSSPGESLEDQLKPMLEWAHGGFKPTGIEGLKPNKKQPVVNKSKVRRSDSRNLEPRRRENKSRRRTTNDSAASESPPPKRLKTNSYGGKDRGEDEESRERMASEVTNNKGNLEDRCLSCGKKNPVSFHPLFEGGLCQSCRDRFLELFYMYDEDGYQSYCTVCCEGRELLLCSNTSCCRCFCVECLEVLVGAGTAEDAKLQEPWSCYMCLPQRCHGVLRRRKDWNMRLQDFFTTDPDLEEFEPPKLYPAIPAAKRRPIRVLSLFDGIATGYLVLKELGIKVEKYIASEVCAESIAVGTVKHEGQIKYVNDVRKITKKNIEEWGPFDLVIGGSPCNDLSNVNPARKGLYEGTGRLFFEFYHLLNYTRPKEGDNRPFFWMFENVVAMKVNDKKDISRFLACNPVMIDAIKVSAAHRARYFWGNLPGMNRPVMASKNDKLELQDCLEFSRTAKLKKVQTITTKSNSIRQGKNQLFPVVMNGKDDVLWCTELERIFGFPAHYTDVSNMGRGARQKLLGRSWSVPVIRHLFAPLKDYFACE.

Residues 1–305 (MKGDSRHLNE…LATFNKLVSY (305 aa)) are interaction with DNMT1 and DNMT3A. Residues 25–226 (GNFSDQSSDT…RDGDSTEYQD (202 aa)) are disordered. Residues 85–94 (DRDDEVDDGN) show a composition bias toward acidic residues. The residue at position 96 (Ser96) is a Phosphoserine. Lys102 is covalently cross-linked (Glycyl lysine isopeptide (Lys-Gly) (interchain with G-Cter in SUMO2)). Over residues 103-114 (LTRETKDTRTRS) the composition is skewed to basic and acidic residues. The residue at position 112 (Thr112) is a Phosphothreonine. Ser116 carries the phosphoserine modification. Residues 167 to 179 (SSSASTPWSSPAS) are compositionally biased toward low complexity. Residues 189–198 (KSVSTPSVDL) show a composition bias toward polar residues. Residues 214 to 226 (AESRDGDSTEYQD) show a composition bias toward basic and acidic residues. Ser216 is subject to Phosphoserine. The PWWP domain occupies 232 to 290 (IGDLVWGKIKGFSWWPAMVVSWKATSKRQAMPGMRWVQWFGDGKFSEISADKLVALGLF). The tract at residues 348–429 (KPTGIEGLKP…ESRERMASEV (82 aa)) is disordered. 2 stretches are compositionally biased toward basic and acidic residues: residues 370 to 381 (RRSDSRNLEPRR) and 412 to 426 (GKDR…ERMA). Arg415 is modified (citrulline). An ADD domain is found at 428 to 560 (EVTNNKGNLE…LQDFFTTDPD (133 aa)). A GATA-type; atypical zinc finger spans residues 439 to 469 (RCLSCGKKNPVSFHPLFEGGLCQSCRDRFLE). The tract at residues 440 to 532 (CLSCGKKNPV…LQEPWSCYMC (93 aa)) is interaction with the PRC2/EED-EZH2 complex. The segment at 480–536 (QSYCTVCCEGRELLLCSNTSCCRCFCVECLEVLVGAGTAEDAKLQEPWSCYMCLPQR) adopts a PHD-type; atypical zinc-finger fold. Residues 581–859 (IRVLSLFDGI…APLKDYFACE (279 aa)) form the SAM-dependent MTase C5-type domain. Residues 588 to 592 (DGIAT) and Glu611 each bind S-adenosyl-L-methionine. Lys623 participates in a covalent cross-link: Glycyl lysine isopeptide (Lys-Gly) (interchain with G-Cter in SUMO2). Residue 633-635 (DVR) coordinates S-adenosyl-L-methionine. Residue Cys657 is part of the active site. Position 838–840 (838–840 (RSW)) interacts with S-adenosyl-L-methionine.

It belongs to the class I-like SAM-binding methyltransferase superfamily. C5-methyltransferase family. Interacts with CBX4, DNMT1, DNMT3A, SETDB1, UBE2I9, UBL1 and ZHX1. Interacts with SUV39H1 and BAZ2A/TIP5. Interacts with the PRC2/EED-EZH2 complex. Interacts with UHRF1. Sumoylated. Post-translationally, citrullinated by PADI4.

It localises to the nucleus. The catalysed reaction is a 2'-deoxycytidine in DNA + S-adenosyl-L-methionine = a 5-methyl-2'-deoxycytidine in DNA + S-adenosyl-L-homocysteine + H(+). With respect to regulation, activated by binding to the regulatory factor DNMT3L. Functionally, required for genome-wide de novo methylation and is essential for the establishment of DNA methylation patterns during development. DNA methylation is coordinated with methylation of histones. May preferentially methylates nucleosomal DNA within the nucleosome core region. May function as transcriptional co-repressor by associating with CBX4 and independently of DNA methylation. Seems to be involved in gene silencing. In association with DNMT1 and via the recruitment of CTCFL/BORIS, involved in activation of BAG1 gene expression by modulating dimethylation of promoter histone H3 at H3K4 and H3K9. Functions as a transcriptional corepressor by associating with ZHX1. Required for DUX4 silencing in somatic cells. This chain is DNA (cytosine-5)-methyltransferase 3B (Dnmt3b), found in Mus musculus (Mouse).